The primary structure comprises 123 residues: Large ribosomal subunit protein uL18 (123 aa).

This sequence belongs to the universal ribosomal protein uL18 family. In terms of assembly, part of the 50S ribosomal subunit; part of the 5S rRNA/L5/L18/L25 subcomplex. Contacts the 5S and 23S rRNAs.

Functionally, this is one of the proteins that bind and probably mediate the attachment of the 5S RNA into the large ribosomal subunit, where it forms part of the central protuberance. The polypeptide is Large ribosomal subunit protein uL18 (Chlamydia muridarum (strain MoPn / Nigg)).